We begin with the raw amino-acid sequence, 105 residues long: UPF0145 protein lpg0197 (105 aa).

This sequence belongs to the UPF0145 family.

In Legionella pneumophila subsp. pneumophila (strain Philadelphia 1 / ATCC 33152 / DSM 7513), this protein is UPF0145 protein lpg0197.